A 159-amino-acid polypeptide reads, in one-letter code: Nucleoside diphosphate kinase (159 aa).

ATP is bound by residues Lys-14, Phe-62, Arg-90, Thr-96, and Arg-107. The active-site Pros-phosphohistidine intermediate is the His-123.

The protein belongs to the NDK family. Requires Mg(2+) as cofactor.

The protein localises to the cytoplasm. It carries out the reaction a 2'-deoxyribonucleoside 5'-diphosphate + ATP = a 2'-deoxyribonucleoside 5'-triphosphate + ADP. The enzyme catalyses a ribonucleoside 5'-diphosphate + ATP = a ribonucleoside 5'-triphosphate + ADP. Its function is as follows. Major role in the synthesis of nucleoside triphosphates other than ATP. The ATP gamma phosphate is transferred to the NDP beta phosphate via a ping-pong mechanism, using a phosphorylated active-site intermediate. In Pyrococcus abyssi (strain GE5 / Orsay), this protein is Nucleoside diphosphate kinase.